The sequence spans 362 residues: MRDETPEQPAPLRFGYTTGSCATATSLAAARLLLAGQADDAVEIVLPKGQRVMMRLEFCRATADGAEAGTIKDAGDDPDVTHGALIFARVALAAAPGVRFHAGPGVGTVTRAGLMLPVGEPAINPVPRQMMTTHLEALAAEHGYAGGFDVTIGVEGGEMLALKTMNPRLGIVGGLSILGTTGIVRPFSCSAYIASIHQGIDVARANGIAHIAACTGNASEDAMRAHYQLPDMALIEMGDFAGAVLKHLRRAPVARLSMCGGFGKLSKLAAGHLDLHSRHSSIDLPLLAQWAAEAGANDALQAAMRAANTSQEALKLAQADGVPLGDLVCAHALRVARDIVPPSVVIEMFAIDRQGRFVGVAR.

The protein belongs to the CbiD family.

It carries out the reaction Co-precorrin-5B + S-adenosyl-L-methionine = Co-precorrin-6A + S-adenosyl-L-homocysteine. It participates in cofactor biosynthesis; adenosylcobalamin biosynthesis; cob(II)yrinate a,c-diamide from sirohydrochlorin (anaerobic route): step 6/10. In terms of biological role, catalyzes the methylation of C-1 in cobalt-precorrin-5B to form cobalt-precorrin-6A. The protein is Cobalt-precorrin-5B C(1)-methyltransferase of Burkholderia orbicola (strain MC0-3).